A 130-amino-acid chain; its full sequence is Small ribosomal subunit protein uS8 (130 aa).

It belongs to the universal ribosomal protein uS8 family. In terms of assembly, part of the 30S ribosomal subunit. Contacts proteins S5 and S12.

Its function is as follows. One of the primary rRNA binding proteins, it binds directly to 16S rRNA central domain where it helps coordinate assembly of the platform of the 30S subunit. The sequence is that of Small ribosomal subunit protein uS8 from Neisseria meningitidis serogroup C (strain 053442).